The following is a 447-amino-acid chain: Multicopper oxidase mco (447 aa).

The segment covering 1 to 25 (MMDMKENDQKRNDMMDMKSHDERKN) has biased composition (basic and acidic residues). A disordered region spans residues 1-43 (MMDMKENDQKRNDMMDMKSHDERKNLNSSQGKNEITFPKVLDP). Residues H107, H109, H147, H149, H375, H378, H380, H428, C429, H430, H434, and M439 each contribute to the Cu cation site.

It belongs to the multicopper oxidase family. It depends on Cu cation as a cofactor.

It is found in the cytoplasm. Its function is as follows. May be involved in copper homeostasis and oxidative stress response. Oxidizes the substrate 3,3'-dimethoxybenzidine in vitro. Also possesses low levels of phenoloxidase and ferroxidase activities. The protein is Multicopper oxidase mco (mco) of Staphylococcus aureus.